We begin with the raw amino-acid sequence, 65 residues long: Large ribosomal subunit protein bL33m (65 aa).

The protein belongs to the bacterial ribosomal protein bL33 family. As to quaternary structure, component of the mitochondrial ribosome large subunit (39S) which comprises a 16S rRNA and about 50 distinct proteins.

The protein localises to the mitochondrion. The polypeptide is Large ribosomal subunit protein bL33m (mRpL33) (Anopheles gambiae (African malaria mosquito)).